We begin with the raw amino-acid sequence, 1342 residues long: DNA-directed RNA polymerase subunit beta (1342 aa).

This sequence belongs to the RNA polymerase beta chain family. The RNAP catalytic core consists of 2 alpha, 1 beta, 1 beta' and 1 omega subunit. When a sigma factor is associated with the core the holoenzyme is formed, which can initiate transcription.

The enzyme catalyses RNA(n) + a ribonucleoside 5'-triphosphate = RNA(n+1) + diphosphate. DNA-dependent RNA polymerase catalyzes the transcription of DNA into RNA using the four ribonucleoside triphosphates as substrates. This chain is DNA-directed RNA polymerase subunit beta, found in Glaesserella parasuis serovar 5 (strain SH0165) (Haemophilus parasuis).